A 154-amino-acid polypeptide reads, in one-letter code: Small ribosomal subunit protein uS19B (154 aa).

At S63 the chain carries Phosphoserine.

Belongs to the universal ribosomal protein uS19 family. As to quaternary structure, component of the small ribosomal subunit (SSU). Mature yeast ribosomes consist of a small (40S) and a large (60S) subunit. The 40S small subunit contains 1 molecule of ribosomal RNA (18S rRNA) and at least 33 different proteins. The large 60S subunit contains 3 rRNA molecules (25S, 5.8S and 5S rRNA) and at least 46 different proteins.

Its subcellular location is the cytoplasm. It is found in the nucleus. The protein localises to the nucleolus. Its function is as follows. Component of the ribosome, a large ribonucleoprotein complex responsible for the synthesis of proteins in the cell. The small ribosomal subunit (SSU) binds messenger RNAs (mRNAs) and translates the encoded message by selecting cognate aminoacyl-transfer RNA (tRNA) molecules. The large subunit (LSU) contains the ribosomal catalytic site termed the peptidyl transferase center (PTC), which catalyzes the formation of peptide bonds, thereby polymerizing the amino acids delivered by tRNAs into a polypeptide chain. The nascent polypeptides leave the ribosome through a tunnel in the LSU and interact with protein factors that function in enzymatic processing, targeting, and the membrane insertion of nascent chains at the exit of the ribosomal tunnel. uS19 is involved in the nuclear export of the small ribosomal subunit precursor. Has a role in the late stage of the assembly of pre-40S particles within the nucleus and controls their export to the cytoplasm. The protein is Small ribosomal subunit protein uS19B (rps1502) of Schizosaccharomyces pombe (strain 972 / ATCC 24843) (Fission yeast).